The sequence spans 224 residues: MKPCAIVLLSGGLDSATALAMAREAGFACHALSLDYGQRHTAELAAAARLAAQLGAVEHRVIRLGLGDFGGSALTDASIAVPESPVAGIPVTYVPARNTVMLALALAWAEVLGARDIFIGVNAVDYSGYPDCRPEFIEAFERMANLATKAGVEGAQLRIHAPLQHLSKAEIIHRGTALGVDYAQTVSCYQADAEGRACGRCDACRLRREGFLAAGLADPTRYAR.

Leu-9–Leu-19 serves as a coordination point for ATP. Zn(2+) is bound by residues Cys-188, Cys-198, Cys-201, and Cys-204.

Belongs to the QueC family. It depends on Zn(2+) as a cofactor.

The enzyme catalyses 7-carboxy-7-deazaguanine + NH4(+) + ATP = 7-cyano-7-deazaguanine + ADP + phosphate + H2O + H(+). It functions in the pathway purine metabolism; 7-cyano-7-deazaguanine biosynthesis. Catalyzes the ATP-dependent conversion of 7-carboxy-7-deazaguanine (CDG) to 7-cyano-7-deazaguanine (preQ(0)). In Thiobacillus denitrificans (strain ATCC 25259 / T1), this protein is 7-cyano-7-deazaguanine synthase.